A 276-amino-acid polypeptide reads, in one-letter code: Probable ABC transporter permease protein PH1036 (276 aa).

The next 6 helical transmembrane spans lie at 12 to 32 (IAWS…MASV), 75 to 95 (IVAI…AYAF), 109 to 129 (FIVL…YFLL), 137 to 157 (TFRG…IFFM), 186 to 206 (IVLP…FTWV), and 241 to 261 (GLLT…YALF). Residues 70–261 (LKNSLIVAIP…LVPLLVYALF (192 aa)) enclose the ABC transmembrane type-1 domain.

This sequence belongs to the binding-protein-dependent transport system permease family. MalFG subfamily.

It localises to the cell membrane. Its function is as follows. Probably part of a binding-protein-dependent transport system PH1036/38/39. Probably responsible for the translocation of the substrate across the membrane. This chain is Probable ABC transporter permease protein PH1036, found in Pyrococcus horikoshii (strain ATCC 700860 / DSM 12428 / JCM 9974 / NBRC 100139 / OT-3).